A 23-amino-acid polypeptide reads, in one-letter code: Caerulein precursor fragment R6 (23 aa).

As to expression, expressed by the skin glands.

Its subcellular location is the secreted. Its function is as follows. Antimicrobial peptide. In Xenopus ruwenzoriensis (Uganda clawed frog), this protein is Caerulein precursor fragment R6.